The primary structure comprises 423 residues: GTPase Obg (423 aa).

Positions 1–158 constitute an Obg domain; sequence MFYDEAKIYV…RWLVLELKLL (158 aa). The 170-residue stretch at 159-328 folds into the OBG-type G domain; sequence ADVGLIGLPN…LLYHVSGLLA (170 aa). GTP-binding positions include 165-172, 190-194, 212-215, 281-284, and 309-311; these read GLPNAGKS, FTTLT, DIPG, NKMD, and SAA. Serine 172 and threonine 192 together coordinate Mg(2+). In terms of domain architecture, OCT spans 336–421; it reads VTAPEEEKVT…IGKFEFEYVE (86 aa).

Belongs to the TRAFAC class OBG-HflX-like GTPase superfamily. OBG GTPase family. In terms of assembly, monomer. Mg(2+) serves as cofactor.

Its subcellular location is the cytoplasm. In terms of biological role, an essential GTPase which binds GTP, GDP and possibly (p)ppGpp with moderate affinity, with high nucleotide exchange rates and a fairly low GTP hydrolysis rate. Plays a role in control of the cell cycle, stress response, ribosome biogenesis and in those bacteria that undergo differentiation, in morphogenesis control. The chain is GTPase Obg from Moorella thermoacetica (strain ATCC 39073 / JCM 9320).